The primary structure comprises 312 residues: MTKLIFMGTPAFSATVLRGLLADGNYNILAVVTQPDRAVGRKKVIQMTPVKEVALEYNLPVYQPEKLSGSQEMDELMNLGADGIVTAAFGQFLPTKLLNSVDFAVNVHASLLPKYRGGAPIHYALINGDERAGVTIMEMVKEMDAGDMISSDSIAIEESDNVGTLFEKLAVVGRDLLLQTLPAYIAGDLKPVAQNPEQVTFSPNIQPEEEVLDWNKTARQLFNQIRGMYPWPVAHTYWQGERFKIQEAVEAEGEGSVGRVIARSKKELIIATGQGALSLKTVQPAGKPKMTIADFLNGAGRDIAVGDQFGDQ.

Residue 110-113 (SLLP) participates in (6S)-5,6,7,8-tetrahydrofolate binding.

The protein belongs to the Fmt family.

The catalysed reaction is L-methionyl-tRNA(fMet) + (6R)-10-formyltetrahydrofolate = N-formyl-L-methionyl-tRNA(fMet) + (6S)-5,6,7,8-tetrahydrofolate + H(+). Functionally, attaches a formyl group to the free amino group of methionyl-tRNA(fMet). The formyl group appears to play a dual role in the initiator identity of N-formylmethionyl-tRNA by promoting its recognition by IF2 and preventing the misappropriation of this tRNA by the elongation apparatus. The protein is Methionyl-tRNA formyltransferase of Streptococcus suis (strain 05ZYH33).